Consider the following 354-residue polypeptide: Trans-3-hydroxy-L-proline dehydratase (354 aa).

The Proton acceptor role is filled by C104. Residues 105–106 (GH), D269, and 274–275 (GS) each bind substrate.

This sequence belongs to the proline racemase family. Homodimer. As to expression, ubiquitously expressed.

It carries out the reaction trans-3-hydroxy-L-proline = 1-pyrroline-2-carboxylate + H2O. Functionally, catalyzes the dehydration of trans-3-hydroxy-L-proline to Delta(1)-pyrroline-2-carboxylate (Pyr2C). May be required to degrade trans-3-hydroxy-L-proline from the diet and originating from the degradation of proteins such as collagen-IV that contain it. This is Trans-3-hydroxy-L-proline dehydratase (L3HYPDH) from Homo sapiens (Human).